Reading from the N-terminus, the 122-residue chain is S-protein homolog 23 (122 aa).

The N-terminal stretch at 1–20 is a signal peptide; the sequence is MQNLSILLVCSFCILGHVSS. Asn86 carries N-linked (GlcNAc...) asparagine glycosylation.

It belongs to the plant self-incompatibility (S1) protein family.

Its subcellular location is the secreted. This Arabidopsis thaliana (Mouse-ear cress) protein is S-protein homolog 23.